The following is a 318-amino-acid chain: Mitochondrial thiamine pyrophosphate carrier (318 aa).

3 Solcar repeats span residues 13–106 (NSKL…LTEL), 116–202 (HQFS…LKRA), and 214–309 (TGNL…FCNL). A run of 6 helical transmembrane segments spans residues 19 to 39 (AVAG…LDVI), 87 to 107 (ILSI…TELL), 122 to 142 (FVCG…VDVL), 173 to 193 (VFYK…GLQF), 220 to 240 (LLCG…LDLF), and 293 to 313 (ALST…FHCI).

It belongs to the mitochondrial carrier (TC 2.A.29) family.

The protein resides in the mitochondrion membrane. The catalysed reaction is thiamine phosphate(out) + thiamine diphosphate(in) = thiamine phosphate(in) + thiamine diphosphate(out). Mitochondrial transporter mediating uptake of thiamine diphosphate into mitochondria. It is not clear if the antiporter activity is affected by the membrane potential or by the proton electrochemical gradient. The sequence is that of Mitochondrial thiamine pyrophosphate carrier (Slc25a19) from Rattus norvegicus (Rat).